Consider the following 461-residue polypeptide: Glycolipid 2-alpha-mannosyltransferase 2 (461 aa).

Topologically, residues methionine 1–proline 12 are cytoplasmic. Residues tyrosine 13–serine 35 traverse the membrane as a helical; Signal-anchor for type II membrane protein segment. Residues serine 35–valine 52 are compositionally biased toward polar residues. The segment at serine 35–glutamate 138 is disordered. Residues alanine 36–glutamine 461 are Lumenal-facing. Low complexity-rich tracts occupy residues serine 61 to proline 70 and proline 106 to glutamine 116. Positions glutamate 117–glutamate 126 are enriched in basic and acidic residues. Catalysis depends on glutamate 349, which acts as the Nucleophile.

The protein belongs to the glycosyltransferase 15 family.

It is found in the golgi apparatus membrane. Involved in O-glycosylation of cell wall and secreted proteins. Transfers an alpha-D-mannosyl residue from GDP-mannose into lipid-linked oligosaccharide, forming an alpha-(1-&gt;2)-D-mannosyl-D-mannose linkage. Mainly responsible for the addition of the third mannose residue in an O-linked mannose pentamer. Can also substitute for MNT1 by adding the second mannose residue. Important for adherence to host surfaces and for virulence. The protein is Glycolipid 2-alpha-mannosyltransferase 2 (MNT2) of Candida albicans (strain SC5314 / ATCC MYA-2876) (Yeast).